The sequence spans 47 residues: Large ribosomal subunit protein uL14c (47 aa).

The protein belongs to the universal ribosomal protein uL14 family. In terms of assembly, part of the 50S ribosomal subunit.

The protein resides in the plastid. Its subcellular location is the chloroplast. Binds to 23S rRNA. The protein is Large ribosomal subunit protein uL14c (rpl14) of Vigna unguiculata (Cowpea).